The following is a 60-amino-acid chain: Metallothionein (60 aa).

Residues 1-28 are beta; the sequence is MDPCDCSKTGKCNCGGSCTCTNCSCTSC. Residues Cys4, Cys6, Cys12, Cys14, Cys18, Cys20, Cys23, Cys25, Cys28, Cys32, Cys33, Cys35, Cys36, Cys40, Cys43, Cys47, Cys49, Cys54, Cys58, and Cys59 each contribute to the a divalent metal cation site. The tract at residues 29-60 is alpha; the sequence is KKSCCACCPSGCTKCASGCVCKGKTCDTTCCQ.

It belongs to the metallothionein superfamily. Type 1 family.

Functionally, metallothioneins have a high content of cysteine residues that bind various heavy metals. In Oryzias latipes (Japanese rice fish), this protein is Metallothionein (mt).